A 263-amino-acid chain; its full sequence is Glutathione S-transferase F8, chloroplastic (263 aa).

The transit peptide at 1-49 (MGAIQARLPLFLSPPSIKHHTFLHSSSSNSNFKIRSNKSSSSSSSSIIM) directs the protein to the chloroplast. The GST N-terminal domain maps to 50-131 (ASIKVHGVPM…YLAEEYSEKG (82 aa)). Residues 60–61 (ST), 89–90 (HK), 102–103 (QI), and 115–116 (ES) contribute to the glutathione site. In terms of domain architecture, GST C-terminal spans 139–263 (CKKVKATTNV…WAKVIDLQKQ (125 aa)). The residue at position 177 (Thr-177) is a Phosphothreonine.

It belongs to the GST superfamily. Phi family. In terms of tissue distribution, isoform 1 is predominantly expressed in leaves and isoform 2 in roots.

Its subcellular location is the plastid. The protein localises to the chloroplast. The protein resides in the cytoplasm. It localises to the cytosol. It carries out the reaction RX + glutathione = an S-substituted glutathione + a halide anion + H(+). Functionally, in vitro, possesses glutathione S-transferase activity toward 1-chloro-2,4-dinitrobenzene (CDNB) and glutathione peroxidase activity toward cumene hydroperoxide and linoleic acid-13-hydroperoxide. May be involved in the conjugation of reduced glutathione to a wide number of exogenous and endogenous hydrophobic electrophiles and have a detoxification role against certain herbicides. The protein is Glutathione S-transferase F8, chloroplastic (GSTF8) of Arabidopsis thaliana (Mouse-ear cress).